Reading from the N-terminus, the 623-residue chain is Aspartate--tRNA(Asp/Asn) ligase (623 aa).

Glu-175 serves as a coordination point for L-aspartate. The aspartate stretch occupies residues 199–202 (QQYK). L-aspartate-binding residues include Arg-221 and His-483. 221 to 223 (RDE) is a binding site for ATP. Glu-517 is an ATP binding site. Residue Arg-524 coordinates L-aspartate. An ATP-binding site is contributed by 569 to 572 (GVDR).

The protein belongs to the class-II aminoacyl-tRNA synthetase family. Type 1 subfamily. In terms of assembly, homodimer.

The protein localises to the cytoplasm. It carries out the reaction tRNA(Asx) + L-aspartate + ATP = L-aspartyl-tRNA(Asx) + AMP + diphosphate. In terms of biological role, aspartyl-tRNA synthetase with relaxed tRNA specificity since it is able to aspartylate not only its cognate tRNA(Asp) but also tRNA(Asn). Reaction proceeds in two steps: L-aspartate is first activated by ATP to form Asp-AMP and then transferred to the acceptor end of tRNA(Asp/Asn). This is Aspartate--tRNA(Asp/Asn) ligase from Xanthobacter autotrophicus (strain ATCC BAA-1158 / Py2).